The sequence spans 69 residues: Rubredoxin-1 (69 aa).

The Rubredoxin-like domain maps to 14-69 (QASWMCAECGYIYDPAEGNLETNIRPGMPFDKLPDDWSCPVCNHPKNQFTKFISQL). Fe cation contacts are provided by Cys-19, Cys-22, Cys-52, and Cys-55.

Belongs to the rubredoxin family. In terms of assembly, monomer. Requires Fe(3+) as cofactor.

In terms of biological role, serves as an electron acceptor for pyruvate ferredoxin oxidoreductase (PFOR). This chain is Rubredoxin-1 (rub1), found in Chlorobaculum tepidum (strain ATCC 49652 / DSM 12025 / NBRC 103806 / TLS) (Chlorobium tepidum).